Here is a 429-residue protein sequence, read N- to C-terminus: Adenylosuccinate synthetase (429 aa).

GTP is bound by residues 12–18 (GDEGKGK) and 40–42 (GHT). Aspartate 13 functions as the Proton acceptor in the catalytic mechanism. Residues aspartate 13 and glycine 40 each coordinate Mg(2+). Residues 13–16 (DEGK), 38–41 (NAGH), threonine 129, arginine 143, glutamine 223, threonine 238, and arginine 302 contribute to the IMP site. Histidine 41 serves as the catalytic Proton donor. Substrate is bound at residue 298–304 (TVTGRRR). Residues arginine 304, 330-332 (KLD), and 412-414 (STS) contribute to the GTP site.

It belongs to the adenylosuccinate synthetase family. As to quaternary structure, homodimer. Requires Mg(2+) as cofactor.

It is found in the cytoplasm. It carries out the reaction IMP + L-aspartate + GTP = N(6)-(1,2-dicarboxyethyl)-AMP + GDP + phosphate + 2 H(+). It participates in purine metabolism; AMP biosynthesis via de novo pathway; AMP from IMP: step 1/2. Functionally, plays an important role in the de novo pathway of purine nucleotide biosynthesis. Catalyzes the first committed step in the biosynthesis of AMP from IMP. The chain is Adenylosuccinate synthetase from Granulibacter bethesdensis (strain ATCC BAA-1260 / CGDNIH1).